The chain runs to 289 residues: RING-H2 finger protein ATL29 (289 aa).

Residues 25–45 (VILTVILLVFFFIGFFTLYFC) traverse the membrane as a helical segment. An RING-type; atypical zinc finger spans residues 110–152 (CAICLLEFDGDHVLRLLTTCYHVFHQECIDLWFESHRTCPVCR). Positions 179–237 (TSDDEEDDHHRQQTTTQIDTWPSSGQTSSIKKEQNLPEKFSRSHSTGHSIVRNKPEEED) are disordered. Polar residues predominate over residues 191–207 (QTTTQIDTWPSSGQTSS). Basic and acidic residues predominate over residues 208–219 (IKKEQNLPEKFS).

It belongs to the RING-type zinc finger family. ATL subfamily.

It localises to the membrane. The catalysed reaction is S-ubiquitinyl-[E2 ubiquitin-conjugating enzyme]-L-cysteine + [acceptor protein]-L-lysine = [E2 ubiquitin-conjugating enzyme]-L-cysteine + N(6)-ubiquitinyl-[acceptor protein]-L-lysine.. It functions in the pathway protein modification; protein ubiquitination. The protein is RING-H2 finger protein ATL29 (ATL29) of Arabidopsis thaliana (Mouse-ear cress).